An 86-amino-acid chain; its full sequence is Large ribosomal subunit protein bL31B (86 aa).

The protein belongs to the bacterial ribosomal protein bL31 family. Type B subfamily. In terms of assembly, part of the 50S ribosomal subunit.

The protein is Large ribosomal subunit protein bL31B of Yersinia pseudotuberculosis serotype O:1b (strain IP 31758).